Consider the following 260-residue polypeptide: Putative ABC transporter substrate-binding lipoprotein YvgL (260 aa).

The N-terminal stretch at 1 to 20 (MFKKYSIFIAALTAFLLVAG) is a signal peptide. Cys-21 carries N-palmitoyl cysteine lipidation. Cys-21 carries the S-diacylglycerol cysteine lipid modification. Molybdate contacts are provided by Ser-43, Ser-71, Ala-151, Val-178, and Tyr-196.

It belongs to the bacterial solute-binding protein ModA family.

Its subcellular location is the cell membrane. The chain is Putative ABC transporter substrate-binding lipoprotein YvgL (yvgL) from Bacillus subtilis (strain 168).